We begin with the raw amino-acid sequence, 311 residues long: Methionyl-tRNA formyltransferase (311 aa).

(6S)-5,6,7,8-tetrahydrofolate is bound at residue 110-113 (SLLP).

The protein belongs to the Fmt family.

It carries out the reaction L-methionyl-tRNA(fMet) + (6R)-10-formyltetrahydrofolate = N-formyl-L-methionyl-tRNA(fMet) + (6S)-5,6,7,8-tetrahydrofolate + H(+). Its function is as follows. Attaches a formyl group to the free amino group of methionyl-tRNA(fMet). The formyl group appears to play a dual role in the initiator identity of N-formylmethionyl-tRNA by promoting its recognition by IF2 and preventing the misappropriation of this tRNA by the elongation apparatus. This Streptococcus pyogenes serotype M6 (strain ATCC BAA-946 / MGAS10394) protein is Methionyl-tRNA formyltransferase.